The primary structure comprises 319 residues: Small ribosomal subunit protein RACK1 (319 aa).

Ala-2 is subject to N-acetylalanine. WD repeat units lie at residues 15 to 55 (GHNG…QKFG), 63 to 102 (GHSH…TYQR), 105 to 145 (GHKS…ATLL), 147 to 191 (HNDW…IEAD), 194 to 233 (GHNS…AMYT), 235 to 275 (SAQD…DDLR), and 284 to 319 (AAEP…MTAN). Residues Lys-46 and Lys-53 each participate in a glycyl lysine isopeptide (Lys-Gly) (interchain with G-Cter in ubiquitin) cross-link. The residue at position 96 (Thr-96) is a Phosphothreonine. Residues Lys-107, Lys-137, and Lys-161 each participate in a glycyl lysine isopeptide (Lys-Gly) (interchain with G-Cter in ubiquitin) cross-link. Phosphothreonine is present on Thr-168.

It belongs to the WD repeat G protein beta family. Ribosomal protein RACK1 subfamily. As to quaternary structure, component of the small ribosomal subunit (SSU). Mature yeast ribosomes consist of a small (40S) and a large (60S) subunit. The 40S small subunit contains 1 molecule of ribosomal RNA (18S rRNA) and 33 different proteins (encoded by 57 genes). The large 60S subunit contains 3 rRNA molecules (25S, 5.8S and 5S rRNA) and 46 different proteins (encoded by 81 genes). RACK1 is located at the head of the SSU in the vicinity of the mRNA exit channel. RACK1 interacts with the mRNA-binding protein SCP16. RACK1 also exists simultaneously as a homodimer in a cytosolic non-ribosome-bound form.

Its subcellular location is the cytoplasm. Its function is as follows. Component of the ribosome, a large ribonucleoprotein complex responsible for the synthesis of proteins in the cell. The small ribosomal subunit (SSU) binds messenger RNAs (mRNAs) and translates the encoded message by selecting cognate aminoacyl-transfer RNA (tRNA) molecules. The large subunit (LSU) contains the ribosomal catalytic site termed the peptidyl transferase center (PTC), which catalyzes the formation of peptide bonds, thereby polymerizing the amino acids delivered by tRNAs into a polypeptide chain. The nascent polypeptides leave the ribosome through a tunnel in the LSU and interact with protein factors that function in enzymatic processing, targeting, and the membrane insertion of nascent chains at the exit of the ribosomal tunnel. Located at the head of the 40S ribosomal subunit in the vicinity of the mRNA exit channel, RACK1 serves as a scaffold protein that can recruit other proteins to the ribosome. Involved in induction of the ribosome quality control (RQC) pathway; a pathway that degrades nascent peptide chains during problematic translation. Involved in the negative regulation of translation of a specific subset of proteins. The protein is Small ribosomal subunit protein RACK1 of Saccharomyces cerevisiae (strain ATCC 204508 / S288c) (Baker's yeast).